A 376-amino-acid chain; its full sequence is Alcohol dehydrogenase class-3 (376 aa).

Ser-1 is modified (N-acetylserine). Residues Cys-47, His-69, Cys-99, Cys-102, Cys-105, Cys-113, and Cys-176 each contribute to the Zn(2+) site.

This sequence belongs to the zinc-containing alcohol dehydrogenase family. Class-III subfamily. As to quaternary structure, homodimer. Zn(2+) is required as a cofactor. Liver and gut.

It localises to the cytoplasm. The enzyme catalyses a primary alcohol + NAD(+) = an aldehyde + NADH + H(+). It carries out the reaction a secondary alcohol + NAD(+) = a ketone + NADH + H(+). The catalysed reaction is S-(hydroxymethyl)glutathione + NADP(+) = S-formylglutathione + NADPH + H(+). It catalyses the reaction S-(hydroxymethyl)glutathione + NAD(+) = S-formylglutathione + NADH + H(+). The enzyme catalyses S-nitrosoglutathione + NADH + H(+) = S-(hydroxysulfenamide)glutathione + NAD(+). Functionally, class-III ADH is remarkably ineffective in oxidizing ethanol, but it readily catalyzes the oxidation of long-chain primary alcohols and the oxidation of S-(hydroxymethyl) glutathione. Also acts as a S-nitroso-glutathione reductase by catalyzing the NADH-dependent reduction of S-nitrosoglutathione, thereby regulating protein S-nitrosylation. The polypeptide is Alcohol dehydrogenase class-3 (Myxine glutinosa (Atlantic hagfish)).